Consider the following 141-residue polypeptide: Putative pre-16S rRNA nuclease (141 aa).

This sequence belongs to the YqgF nuclease family.

Its subcellular location is the cytoplasm. Its function is as follows. Could be a nuclease involved in processing of the 5'-end of pre-16S rRNA. In Shewanella oneidensis (strain ATCC 700550 / JCM 31522 / CIP 106686 / LMG 19005 / NCIMB 14063 / MR-1), this protein is Putative pre-16S rRNA nuclease.